The sequence spans 366 residues: Mitogen-activated protein kinase p38a (366 aa).

Residues 25 to 312 (YQDLQPVGSG…AEEALSHPYL (288 aa)) form the Protein kinase domain. ATP is bound by residues 31–39 (VGSGAYGQV) and Lys-54. Residue Asp-154 is the Proton acceptor of the active site. Thr-184 is subject to Phosphothreonine. Positions 184 to 186 (TGY) match the TXY motif. Tyr-186 is modified (phosphotyrosine).

This sequence belongs to the protein kinase superfamily. CMGC Ser/Thr protein kinase family. MAP kinase subfamily. Requires Mg(2+) as cofactor. Post-translationally, dually phosphorylated on Thr-184 and Tyr-186, which activates the enzyme.

The protein resides in the nucleus. It catalyses the reaction L-seryl-[protein] + ATP = O-phospho-L-seryl-[protein] + ADP + H(+). The enzyme catalyses L-threonyl-[protein] + ATP = O-phospho-L-threonyl-[protein] + ADP + H(+). Activated by threonine and tyrosine phosphorylation by Mkk3 in response to environmental stress. Functionally, kinase involved in a signal transduction pathway. May down-regulate insect immunity gene expression after prolonged infection. The protein is Mitogen-activated protein kinase p38a of Drosophila melanogaster (Fruit fly).